Here is a 189-residue protein sequence, read N- to C-terminus: HGPRTase-like protein (189 aa).

Belongs to the purine/pyrimidine phosphoribosyltransferase family. Archaeal HPRT subfamily.

Its function is as follows. May catalyze a purine salvage reaction, the substrate is unknown. This is HGPRTase-like protein from Natronomonas pharaonis (strain ATCC 35678 / DSM 2160 / CIP 103997 / JCM 8858 / NBRC 14720 / NCIMB 2260 / Gabara) (Halobacterium pharaonis).